A 119-amino-acid polypeptide reads, in one-letter code: Spermidine export protein MdtJ (119 aa).

Helical transmembrane passes span 1-21 (MIYW…TLAL), 31-51 (AGFI…SFSV), 54-74 (IALG…ITLF), and 81-101 (ETLT…ILLI).

It belongs to the drug/metabolite transporter (DMT) superfamily. Small multidrug resistance (SMR) (TC 2.A.7.1) family. MdtJ subfamily. In terms of assembly, forms a complex with MdtI.

Its subcellular location is the cell inner membrane. Functionally, catalyzes the excretion of spermidine. In Cronobacter sakazakii (strain ATCC BAA-894) (Enterobacter sakazakii), this protein is Spermidine export protein MdtJ (mdtJ).